A 47-amino-acid polypeptide reads, in one-letter code: PhoP/PhoQ regulator MgrB (47 aa).

A helical transmembrane segment spans residues 6–26; it reads WVVLGIVVVVCLLLWAQVFNI.

This sequence belongs to the MgrB family. In terms of assembly, may form homooligomers. Probably interacts with the periplasmic domain of PhoQ.

The protein localises to the cell inner membrane. Functionally, phoP-regulated transcription is redox-sensitive, being activated when the periplasm becomes more reducing. MgrB acts between DsbA/DsbB and PhoP/PhoQ in this pathway. Represses PhoP/PhoQ signaling, possibly by binding to the periplasmic domain of PhoQ, altering its activity and that of downstream effector PhoP. This Salmonella gallinarum (strain 287/91 / NCTC 13346) protein is PhoP/PhoQ regulator MgrB.